Reading from the N-terminus, the 360-residue chain is Type II methyltransferase M2.ScrFI (360 aa).

Residues 2-360 (LRVFEAFAGY…SLFKELFKSQ (359 aa)) enclose the SAM-dependent MTase C5-type domain. The active site involves cysteine 127.

This sequence belongs to the class I-like SAM-binding methyltransferase superfamily. C5-methyltransferase family.

It carries out the reaction a 2'-deoxycytidine in DNA + S-adenosyl-L-methionine = a 5-methyl-2'-deoxycytidine in DNA + S-adenosyl-L-homocysteine + H(+). A methylase, recognizes the double-stranded sequence 5'-CCNGG-3', methylates C-2 on both strands, and protects the DNA from cleavage by the ScrFI endonuclease. This Lactococcus lactis subsp. cremoris (Streptococcus cremoris) protein is Type II methyltransferase M2.ScrFI (scrFIBM).